Consider the following 298-residue polypeptide: Mitochondrial distribution and morphology protein 12 (298 aa).

Residues M1–L298 enclose the SMP-LTD domain. The disordered stretch occupies residues S118–L142. A compositionally biased stretch (polar residues) spans E133–L142.

It belongs to the MDM12 family. As to quaternary structure, component of the ER-mitochondria encounter structure (ERMES) or MDM complex, composed of MMM1, MDM10, MDM12 and MDM34. An MMM1 homodimer associates with one molecule of MDM12 on each side in a pairwise head-to-tail manner, and the SMP-LTD domains of MMM1 and MDM12 generate a continuous hydrophobic tunnel for phospholipid trafficking.

The protein resides in the mitochondrion outer membrane. The protein localises to the endoplasmic reticulum membrane. Its function is as follows. Component of the ERMES/MDM complex, which serves as a molecular tether to connect the endoplasmic reticulum (ER) and mitochondria. Components of this complex are involved in the control of mitochondrial shape and protein biogenesis, and function in nonvesicular lipid trafficking between the ER and mitochondria. MDM12 is required for the interaction of the ER-resident membrane protein MMM1 and the outer mitochondrial membrane-resident beta-barrel protein MDM10. The MDM12-MMM1 subcomplex functions in the major beta-barrel assembly pathway that is responsible for biogenesis of all mitochondrial outer membrane beta-barrel proteins, and acts in a late step after the SAM complex. The MDM10-MDM12-MMM1 subcomplex further acts in the TOM40-specific pathway after the action of the MDM12-MMM1 complex. Essential for establishing and maintaining the structure of mitochondria and maintenance of mtDNA nucleoids. This is Mitochondrial distribution and morphology protein 12 from Malassezia globosa (strain ATCC MYA-4612 / CBS 7966) (Dandruff-associated fungus).